A 135-amino-acid polypeptide reads, in one-letter code: Histone H3 type 3 (135 aa).

A disordered region spans residues 1–40 (MARTKQTARKSTGGKAPRKQLATKAARKTPATGGVKKPHR). Position 5 is an N6-methyllysine (Lys-5). Lys-10 bears the N6-acetyllysine; alternate mark. An N6-methyllysine; alternate modification is found at Lys-10. Position 11 is a phosphoserine (Ser-11). Thr-12 is modified (phosphothreonine). Residues Lys-15, Lys-19, and Lys-24 each carry the N6-acetyllysine modification. Lys-28 is subject to N6-acetyllysine; alternate. Residue Lys-28 is modified to N6-methyllysine; alternate. An N6-methyllysine mark is found at Lys-36 and Lys-37.

Belongs to the histone H3 family. As to quaternary structure, the nucleosome is a histone octamer containing two molecules each of H2A, H2B, H3 and H4 assembled in one H3-H4 heterotetramer and two H2A-H2B heterodimers. The octamer wraps approximately 147 bp of DNA. Acetylation is generally linked to gene activation. Acetylated to form H3K9ac (11%), H3K14ac (17%), H3K18ac (11%), H3K23ac (16%) and H3K27ac (7%). H3K4, H3K35 and H3K36 are not acetylated. H3K4me prevents acetylation. 32% of the histone H3 are acetylated with, on average, 2.4 acetyl-Lys. They are all continuously deacatylated and re-acetylated with a half-life of approximately 2 minutes. Post-translationally, monomethylated to form H3K4me1 (81%), H3K9me1 (16%), H3K27me1 (25%), H3K35me1 (25%) and H3K36me1 (5%). No methylation at H3K14, H3K18 and H3K23. Methylated by a protein complex that includes Mut11. Set1 methylates specifically H3K4. H3K4me1 is associated with silenced euchromatin. Set3 forms H3K9me1, while H3K9me2 is undetected. H3K9me1 is specifically associated with silent, multi-copy transgenes. In terms of processing, no phosphorylation detected.

Its subcellular location is the nucleus. The protein resides in the chromosome. Functionally, core component of nucleosome. Nucleosomes wrap and compact DNA into chromatin, limiting DNA accessibility to the cellular machineries which require DNA as a template. Histones thereby play a central role in transcription regulation, DNA repair, DNA replication and chromosomal stability. DNA accessibility is regulated via a complex set of post-translational modifications of histones, also called histone code, and nucleosome remodeling. In Chlamydomonas reinhardtii (Chlamydomonas smithii), this protein is Histone H3 type 3 (ch3-IV).